The following is a 360-amino-acid chain: Mannonate dehydratase (360 aa).

This sequence belongs to the mannonate dehydratase family. Fe(2+) serves as cofactor. It depends on Mn(2+) as a cofactor.

It catalyses the reaction D-mannonate = 2-dehydro-3-deoxy-D-gluconate + H2O. It functions in the pathway carbohydrate metabolism; pentose and glucuronate interconversion. In terms of biological role, catalyzes the dehydration of D-mannonate. This chain is Mannonate dehydratase (uxuA), found in Thermotoga maritima (strain ATCC 43589 / DSM 3109 / JCM 10099 / NBRC 100826 / MSB8).